Consider the following 218-residue polypeptide: Eukaryotic translation initiation factor 3 subunit K (218 aa).

A2 is subject to N-acetylalanine. T28 carries the phosphothreonine modification. Positions 42 to 204 (YDLEANLAVL…SIKPKNIVEK (163 aa)) constitute a PCI domain. A Phosphoserine modification is found at S217.

As to quaternary structure, component of the eukaryotic translation initiation factor 3 (eIF-3) complex, which is composed of 13 subunits: EIF3A, EIF3B, EIF3C, EIF3D, EIF3E, EIF3F, EIF3G, EIF3H, EIF3I, EIF3J, EIF3K, EIF3L and EIF3M. The eIF-3 complex appears to include 3 stable modules: module A is composed of EIF3A, EIF3B, EIF3G and EIF3I; module B is composed of EIF3F, EIF3H, and EIF3M; and module C is composed of EIF3C, EIF3D, EIF3E, EIF3K and EIF3L. EIF3C of module C binds EIF3B of module A and EIF3H of module B, thereby linking the three modules. EIF3J is a labile subunit that binds to the eIF-3 complex via EIF3B. The eIF-3 complex interacts with RPS6KB1 under conditions of nutrient depletion. Mitogenic stimulation leads to binding and activation of a complex composed of MTOR and RPTOR, leading to phosphorylation and release of RPS6KB1 and binding of EIF4B to eIF-3. Interacts with CCND3, but not with CCND1 and CCND2. In terms of tissue distribution, ubiquitous, with the highest levels of expression in brain, testis and kidney.

It is found in the nucleus. The protein localises to the cytoplasm. Component of the eukaryotic translation initiation factor 3 (eIF-3) complex, which is required for several steps in the initiation of protein synthesis. The eIF-3 complex associates with the 40S ribosome and facilitates the recruitment of eIF-1, eIF-1A, eIF-2:GTP:methionyl-tRNAi and eIF-5 to form the 43S pre-initiation complex (43S PIC). The eIF-3 complex stimulates mRNA recruitment to the 43S PIC and scanning of the mRNA for AUG recognition. The eIF-3 complex is also required for disassembly and recycling of post-termination ribosomal complexes and subsequently prevents premature joining of the 40S and 60S ribosomal subunits prior to initiation. The eIF-3 complex specifically targets and initiates translation of a subset of mRNAs involved in cell proliferation, including cell cycling, differentiation and apoptosis, and uses different modes of RNA stem-loop binding to exert either translational activation or repression. This Homo sapiens (Human) protein is Eukaryotic translation initiation factor 3 subunit K.